The sequence spans 523 residues: La-related protein 1C (523 aa).

Low complexity predominate over residues 1–16 (MASATSNNPASSSMSP). Disordered regions lie at residues 1–52 (MASA…VRGE) and 95–313 (AAGD…VRHP). Ala-2 carries the N-acetylalanine modification. Residues 22 to 31 (NHGSPTASVA) show a composition bias toward polar residues. Low complexity-rich tracts occupy residues 32 to 44 (QSPRRPSRQVSSP) and 146 to 169 (SNKSSSDSLKSLGDVPSSSSASSS). Ser-33 carries the phosphoserine modification. Composition is skewed to polar residues over residues 206-270 (QRNG…NGNH) and 282-305 (HGNQNWTFQRSFNGREGNAQSQRG). The HTH La-type RNA-binding domain maps to 363–452 (HYQDPPLHMK…RDNWQNWVLR (90 aa)). Positions 474 to 523 (GNLSVDQSSADPIGGSSSQLQPTEALSDDQQQSSSTAPVSNHNAPDGANR) are disordered. The span at 477 to 516 (SVDQSSADPIGGSSSQLQPTEALSDDQQQSSSTAPVSNHN) shows a compositional bias: polar residues.

This sequence belongs to the LARP family. In terms of tissue distribution, age-dependent accumulation in rosette leaves.

It localises to the cytoplasm. Functionally, promotes leaf senescence mediated by abscisic acid (ABA), salicylic acid (SA) and jasmonic acid (MeJA), probably though the induction of expression of senescence-associated genes (SAGs) and defense-related genes. The chain is La-related protein 1C (LARP1C) from Arabidopsis thaliana (Mouse-ear cress).